Reading from the N-terminus, the 139-residue chain is Gene 39 protein (139 aa).

The chain is Gene 39 protein (39) from Mycobacterium (Mycobacteriophage L5).